The sequence spans 310 residues: Homoserine kinase (310 aa).

Pro-91 to Cys-101 lines the ATP pocket.

The protein belongs to the GHMP kinase family. Homoserine kinase subfamily.

It is found in the cytoplasm. It catalyses the reaction L-homoserine + ATP = O-phospho-L-homoserine + ADP + H(+). It participates in amino-acid biosynthesis; L-threonine biosynthesis; L-threonine from L-aspartate: step 4/5. In terms of biological role, catalyzes the ATP-dependent phosphorylation of L-homoserine to L-homoserine phosphate. The protein is Homoserine kinase of Escherichia coli O139:H28 (strain E24377A / ETEC).